Here is a 309-residue protein sequence, read N- to C-terminus: Porphobilinogen deaminase (309 aa).

Cysteine 241 carries the post-translational modification S-(dipyrrolylmethanemethyl)cysteine.

Belongs to the HMBS family. As to quaternary structure, monomer. Dipyrromethane is required as a cofactor.

It carries out the reaction 4 porphobilinogen + H2O = hydroxymethylbilane + 4 NH4(+). It participates in porphyrin-containing compound metabolism; protoporphyrin-IX biosynthesis; coproporphyrinogen-III from 5-aminolevulinate: step 2/4. Functionally, tetrapolymerization of the monopyrrole PBG into the hydroxymethylbilane pre-uroporphyrinogen in several discrete steps. The polypeptide is Porphobilinogen deaminase (Bacillus cereus (strain AH187)).